We begin with the raw amino-acid sequence, 303 residues long: DCN1-like protein 3 (303 aa).

2 disordered regions span residues 1 to 41 (MGQC…HLSI) and 62 to 83 (EASQ…TGAE). Residue Gly2 is the site of N-myristoyl glycine attachment. The 193-residue stretch at 85–277 (SSVQRIEELF…LFDTFVEWEM (193 aa)) folds into the DCUN1 domain. The interval 284-303 (EETKCIPCSGTDDQSTEGQT) is disordered. Over residues 294-303 (TDDQSTEGQT) the composition is skewed to polar residues.

In terms of assembly, may interact (via the DCUN1 domain) with unneddylated cullins.

It is found in the cell membrane. It localises to the cytoplasm. The protein localises to the nucleus. The protein resides in the perinuclear region. Contributes to the neddylation of all cullins by transferring NEDD8 from N-terminally acetylated NEDD8-conjugating E2s enzyme to different cullin C-terminal domain-RBX complexes. At the cell membrane, can promote and as well inhibit cullins neddylation. The protein is DCN1-like protein 3 of Xenopus tropicalis (Western clawed frog).